A 557-amino-acid polypeptide reads, in one-letter code: MKSDAVTKGIQQAPHRSLFNALGLTKEELDKPLIGIVSSYNEIVPGHMNLDKIVEAVKLGVAMAGGTPIVFPAIAVCDGIAMGHIGMKYSLVTRDLIADSTEAMAMAHSFDALVMVPNCDKNVPGLLMAAARVNIPTIFVSGGPMLAGRVHGEKRSLSSMFEAVGAHAAGKMTEEEVEEFENKVCPTCGSCSGMYTANSMNCLTEALGMGLKGNGTIPAVYSERIRLAKHAGMKIMELLQNNIRPRDIMSEKAFLNALAVDMALGCSTNSMLHLPAIAHEAGVDLNVDIANEISAKTPNLCHLAPAGHTYMEDLNEAGGVYAVMNELDKKGLLYTDLITCTGKTIKENIEGCVNRDPDTIRPIENPYSQTGGIAVLKGNLAPDSGVVKRSAVAPEMMVHVGPARVFDCEEDAIDAIKSGKIVAGDVVVIRYEGPKGGPGMREMLNPTSAIAGMGLGSSVALITDGRFSGASRGASIGHVSPEAAVGGNIALIEEGDIIKIDIPNNSLNFVVSDEELERRRVNWSPREPKITTGYLARYTAMVTSGNRGAILEVPRVK.

Residue Asp78 participates in Mg(2+) binding. Residue Cys119 participates in [2Fe-2S] cluster binding. Asp120 and Lys121 together coordinate Mg(2+). N6-carboxylysine is present on Lys121. Position 191 (Cys191) interacts with [2Fe-2S] cluster. Residue Glu442 participates in Mg(2+) binding. The active-site Proton acceptor is the Ser468.

Belongs to the IlvD/Edd family. Homodimer. Requires [2Fe-2S] cluster as cofactor. Mg(2+) is required as a cofactor.

It carries out the reaction (2R)-2,3-dihydroxy-3-methylbutanoate = 3-methyl-2-oxobutanoate + H2O. The enzyme catalyses (2R,3R)-2,3-dihydroxy-3-methylpentanoate = (S)-3-methyl-2-oxopentanoate + H2O. Its pathway is amino-acid biosynthesis; L-isoleucine biosynthesis; L-isoleucine from 2-oxobutanoate: step 3/4. It participates in amino-acid biosynthesis; L-valine biosynthesis; L-valine from pyruvate: step 3/4. Functionally, functions in the biosynthesis of branched-chain amino acids. Catalyzes the dehydration of (2R,3R)-2,3-dihydroxy-3-methylpentanoate (2,3-dihydroxy-3-methylvalerate) into 2-oxo-3-methylpentanoate (2-oxo-3-methylvalerate) and of (2R)-2,3-dihydroxy-3-methylbutanoate (2,3-dihydroxyisovalerate) into 2-oxo-3-methylbutanoate (2-oxoisovalerate), the penultimate precursor to L-isoleucine and L-valine, respectively. In Lachnoclostridium phytofermentans (strain ATCC 700394 / DSM 18823 / ISDg) (Clostridium phytofermentans), this protein is Dihydroxy-acid dehydratase.